A 362-amino-acid chain; its full sequence is 4-hydroxy-3-methylbut-2-en-1-yl diphosphate synthase (flavodoxin) (362 aa).

Residues Cys-266, Cys-269, Cys-301, and Glu-308 each coordinate [4Fe-4S] cluster.

This sequence belongs to the IspG family. [4Fe-4S] cluster is required as a cofactor.

It carries out the reaction (2E)-4-hydroxy-3-methylbut-2-enyl diphosphate + oxidized [flavodoxin] + H2O + 2 H(+) = 2-C-methyl-D-erythritol 2,4-cyclic diphosphate + reduced [flavodoxin]. Its pathway is isoprenoid biosynthesis; isopentenyl diphosphate biosynthesis via DXP pathway; isopentenyl diphosphate from 1-deoxy-D-xylulose 5-phosphate: step 5/6. In terms of biological role, converts 2C-methyl-D-erythritol 2,4-cyclodiphosphate (ME-2,4cPP) into 1-hydroxy-2-methyl-2-(E)-butenyl 4-diphosphate. This Malacoplasma penetrans (strain HF-2) (Mycoplasma penetrans) protein is 4-hydroxy-3-methylbut-2-en-1-yl diphosphate synthase (flavodoxin).